A 371-amino-acid polypeptide reads, in one-letter code: Cytochrome b (371 aa).

The next 4 helical transmembrane spans lie at 25–45 (FGSM…SLSM), 69–90 (WVMQ…YMYI), 105–125 (WLSG…GYVL), and 170–190 (FFAL…IHIM). Residue histidine 75 coordinates heme b. Heme b contacts are provided by histidine 174 and histidine 188. Histidine 193 is a binding site for a ubiquinone. The next 4 helical transmembrane spans lie at 218–238 (YKDI…VSFF), 280–300 (LGGA…PFTH), 312–332 (LMQF…WTAT), and 339–358 (FTTI…MSNP).

It belongs to the cytochrome b family. In terms of assembly, the cytochrome bc1 complex contains 3 respiratory subunits (MT-CYB, CYC1 and UQCRFS1), 2 core proteins (UQCRC1 and UQCRC2) and probably 6 low-molecular weight proteins. Heme b serves as cofactor.

It is found in the mitochondrion inner membrane. In terms of biological role, component of the ubiquinol-cytochrome c reductase complex (complex III or cytochrome b-c1 complex) that is part of the mitochondrial respiratory chain. The b-c1 complex mediates electron transfer from ubiquinol to cytochrome c. Contributes to the generation of a proton gradient across the mitochondrial membrane that is then used for ATP synthesis. The protein is Cytochrome b (MT-CYB) of Candoia aspera (New Guinea boa).